We begin with the raw amino-acid sequence, 390 residues long: L-seryl-tRNA(Sec) selenium transferase (390 aa).

Lys-225 bears the N6-(pyridoxal phosphate)lysine mark.

Belongs to the SelA family. Pyridoxal 5'-phosphate is required as a cofactor.

The protein localises to the cytoplasm. It carries out the reaction L-seryl-tRNA(Sec) + selenophosphate + H(+) = L-selenocysteinyl-tRNA(Sec) + phosphate. The protein operates within aminoacyl-tRNA biosynthesis; selenocysteinyl-tRNA(Sec) biosynthesis; selenocysteinyl-tRNA(Sec) from L-seryl-tRNA(Sec) (bacterial route): step 1/1. In terms of biological role, converts seryl-tRNA(Sec) to selenocysteinyl-tRNA(Sec) required for selenoprotein biosynthesis. This is L-seryl-tRNA(Sec) selenium transferase from Helicobacter pylori (strain P12).